The chain runs to 618 residues: DNA mismatch repair protein MutL (618 aa).

The span at 367-381 (EPTAAREPATPRYSG) shows a compositional bias: low complexity. Residues 367-402 (EPTAAREPATPRYSGGASGGNGGRQSAGGWPHAQPG) are disordered. The span at 382-392 (GASGGNGGRQS) shows a compositional bias: gly residues.

Belongs to the DNA mismatch repair MutL/HexB family.

This protein is involved in the repair of mismatches in DNA. It is required for dam-dependent methyl-directed DNA mismatch repair. May act as a 'molecular matchmaker', a protein that promotes the formation of a stable complex between two or more DNA-binding proteins in an ATP-dependent manner without itself being part of a final effector complex. The chain is DNA mismatch repair protein MutL from Salmonella heidelberg (strain SL476).